The sequence spans 543 residues: MSFVTAAPEMLATAAQNVANIGTSLSAANATAAASTTSVLAAGADEVSQAIARLFSDYATHYQSLNAQAAAFHHSFVQTLNAAGGAYSSAEAANASAQALEQNLLAVINAPAQALFGRPLIGNGANGTAASPNGGDGGILYGNGGNGFSQTTAGVAGGAGGSAGLIGNGGNGGAGGAGAAGGAGGAGGWLLGNGGAGGPGGPTDVPAGTGGAGGAGGDAPLIGWGGNGGPGGFAAFGNGGAGGNGGASGSLFGVGGAGGVGGSSEDVGGTGGAGGAGRGLFLGLGGDGGAGGTSNNNGGDGGAGGTAGGRLFSLGGDGGNGGAGTAIGSNAGDGGAGGDSSALIGYAQGGSGGLGGFGESTGGDGGLGGAGAVLIGTGVGGFGGLGGGSNGTGGAGGAGGTGATLIGLGAGGGGGIGGFAVNVGNGVGGLGGQGGQGAALIGLGAGGAGGAGGATVVGLGGNGGDGGDGGGLFSIGVGGDGGNAGNGAMPANGGNGGNAGVIANGSFAPSFVGFGGNGGNGVNGGTGGSGGILFGANGANGPS.

Positions 1–93 (MSFVTAAPEM…GGAYSSAEAA (93 aa)) constitute a PE domain. A disordered region spans residues 194-214 (GGAGGPGGPTDVPAGTGGAGG).

The protein belongs to the mycobacterial PE family. PGRS subfamily.

This is an uncharacterized protein from Mycobacterium tuberculosis (strain CDC 1551 / Oshkosh).